A 307-amino-acid chain; its full sequence is Leucine-rich repeat-containing protein 59 (307 aa).

Residues 1 to 247 (MARANGRSQN…LAQRQSRLRK (247 aa)) lie on the Cytoplasmic side of the membrane. LRR repeat units follow at residues 10-31 (NLRD…SEVP), 40-61 (KATA…FCNL), 63-84 (HIVR…FGRL), 86-107 (NLQH…FAQL), and 109-131 (SLKW…AGDC). Positions 156–222 (EIELQRKLQL…LNSNKKAEEE (67 aa)) form a coiled coil. The tract at residues 170–238 (KKKLEAKQRV…RMATPKEKKL (69 aa)) is disordered. Composition is skewed to basic and acidic residues over residues 174-187 (EAKQ…EREM) and 194-238 (QQKE…EKKL). The chain crosses the membrane as a helical span at residues 248 to 268 (IACILLFGLLVVLLVVVACRF). Residues 269–307 (TDLKAINMCTSVNAIYKETLSALHSNPVLERFLQDPSSQ) are Lumenal-facing.

Interacts with SGO1.

Its subcellular location is the microsome membrane. The protein localises to the endoplasmic reticulum membrane. The protein resides in the nucleus envelope. In terms of biological role, required for nuclear import of FGF1. The polypeptide is Leucine-rich repeat-containing protein 59 (lrrc59) (Xenopus laevis (African clawed frog)).